The following is a 215-amino-acid chain: Protein GET1 (215 aa).

The Lumenal portion of the chain corresponds to Met-1 to Leu-4. Residues Ala-5 to Ser-24 traverse the membrane as a helical segment. Residues Val-25–Leu-108 are Cytoplasmic-facing. Positions Ala-73–Ser-94 form a coiled coil. The helical transmembrane segment at Trp-109–Phe-129 threads the bilayer. Residues Trp-130–Ser-153 lie on the Lumenal side of the membrane. The chain crosses the membrane as a helical span at residues Val-154–Leu-170. The Cytoplasmic segment spans residues Gln-171 to Asp-215. Residues Pro-182–Ala-202 form a disordered region.

It belongs to the WRB/GET1 family. As to quaternary structure, interacts with GET3.

It is found in the endoplasmic reticulum membrane. Required for the post-translational delivery of tail-anchored (TA) proteins to the endoplasmic reticulum. Acts as a membrane receptor for soluble GET3, which recognizes and selectively binds the transmembrane domain of TA proteins in the cytosol. The protein is Protein GET1 of Cryptococcus neoformans var. neoformans serotype D (strain JEC21 / ATCC MYA-565) (Filobasidiella neoformans).